The sequence spans 457 residues: uncharacterized protein (457 aa).

The region spanning 10 to 69 (ALLQGQTVTVPITALAAGGDGIARLTDGRVLFVAGAVPGDTVEARLVHLKKDHGFGKILQ) is the TRAM domain. Cysteine 82, cysteine 88, cysteine 91, and cysteine 170 together coordinate [4Fe-4S] cluster. S-adenosyl-L-methionine-binding residues include glutamine 294, tyrosine 323, glutamate 344, and aspartate 387. Residue cysteine 414 is the Nucleophile of the active site.

The protein belongs to the class I-like SAM-binding methyltransferase superfamily. RNA M5U methyltransferase family.

This is an uncharacterized protein from Gloeobacter violaceus (strain ATCC 29082 / PCC 7421).